Consider the following 200-residue polypeptide: Molybdopterin synthase catalytic subunit (200 aa).

The span at Lys-16 to Glu-30 shows a compositional bias: polar residues. The disordered stretch occupies residues Lys-16 to Thr-43. The residue at position 20 (Ser-20) is a Phosphoserine. Substrate-binding positions include His-154 to Arg-155, Lys-170, and Lys-177 to Glu-179.

The protein belongs to the MoaE family. MOCS2B subfamily. As to quaternary structure, heterotetramer; composed of 2 small (MOCS2A) and 2 large (MOCS2B) subunits.

It localises to the cytoplasm. It is found in the cytosol. The catalysed reaction is 2 [molybdopterin-synthase sulfur-carrier protein]-C-terminal-Gly-aminoethanethioate + cyclic pyranopterin phosphate + H2O = molybdopterin + 2 [molybdopterin-synthase sulfur-carrier protein]-C-terminal Gly-Gly + 2 H(+). The protein operates within cofactor biosynthesis; molybdopterin biosynthesis. In terms of biological role, catalytic subunit of the molybdopterin synthase complex, a complex that catalyzes the conversion of precursor Z into molybdopterin. Acts by mediating the incorporation of 2 sulfur atoms from thiocarboxylated MOCS2A into precursor Z to generate a dithiolene group. The polypeptide is Molybdopterin synthase catalytic subunit (Rattus norvegicus (Rat)).